A 499-amino-acid chain; its full sequence is Bifunctional purine biosynthesis protein PurH (499 aa).

The 144-residue stretch at 1-144 folds into the MGS-like domain; the sequence is MIKRALISVF…KNFKDVVVLT (144 aa).

The protein belongs to the PurH family.

The enzyme catalyses (6R)-10-formyltetrahydrofolate + 5-amino-1-(5-phospho-beta-D-ribosyl)imidazole-4-carboxamide = 5-formamido-1-(5-phospho-D-ribosyl)imidazole-4-carboxamide + (6S)-5,6,7,8-tetrahydrofolate. It carries out the reaction IMP + H2O = 5-formamido-1-(5-phospho-D-ribosyl)imidazole-4-carboxamide. It participates in purine metabolism; IMP biosynthesis via de novo pathway; 5-formamido-1-(5-phospho-D-ribosyl)imidazole-4-carboxamide from 5-amino-1-(5-phospho-D-ribosyl)imidazole-4-carboxamide (10-formyl THF route): step 1/1. The protein operates within purine metabolism; IMP biosynthesis via de novo pathway; IMP from 5-formamido-1-(5-phospho-D-ribosyl)imidazole-4-carboxamide: step 1/1. In Clostridium botulinum (strain Hall / ATCC 3502 / NCTC 13319 / Type A), this protein is Bifunctional purine biosynthesis protein PurH.